Consider the following 288-residue polypeptide: RELT-like protein 1 (288 aa).

The N-terminal stretch at 1–23 (MAPPAASGIPSIAPSLGPTAVWL) is a signal peptide. Residues 24-57 (GNRSDLGDVQALASRDLPTTTVTAGNNNKPEHLE) lie on the Extracellular side of the membrane. A glycan (N-linked (GlcNAc...) asparagine) is linked at Asn25. The helical transmembrane segment at 58–78 (YVAFVLVPVFFIMGLLGILIC) threads the bilayer. Topologically, residues 79–288 (HVLKKKGYRC…EGTQERRSSE (210 aa)) are cytoplasmic. 2 disordered regions span residues 145–172 (FEPESPMSPNAPGSPTSPGSPLSPGAAS) and 237–288 (HKSN…RSSE). Positions 152–172 (SPNAPGSPTSPGSPLSPGAAS) are enriched in low complexity. Positions 237–246 (HKSNSKERKS) are enriched in basic and acidic residues.

This sequence belongs to the RELT family.

The protein localises to the cell membrane. The sequence is that of RELT-like protein 1 (RELL1) from Gallus gallus (Chicken).